The sequence spans 469 residues: Glutamate--tRNA ligase (469 aa).

The 'HIGH' region signature appears at 11–21; it reads PSPTGFIHLGN. Residues 114–131 show a composition bias toward basic and acidic residues; that stretch reads QREAGEKPRYDGTWRPEP. Positions 114 to 139 are disordered; it reads QREAGEKPRYDGTWRPEPGKVLPEPP. Positions 243–247 match the 'KMSKS' region motif; sequence KMSKR. Position 246 (Lys-246) interacts with ATP.

The protein belongs to the class-I aminoacyl-tRNA synthetase family. Glutamate--tRNA ligase type 1 subfamily. In terms of assembly, monomer.

The protein localises to the cytoplasm. The catalysed reaction is tRNA(Glu) + L-glutamate + ATP = L-glutamyl-tRNA(Glu) + AMP + diphosphate. Catalyzes the attachment of glutamate to tRNA(Glu) in a two-step reaction: glutamate is first activated by ATP to form Glu-AMP and then transferred to the acceptor end of tRNA(Glu). The protein is Glutamate--tRNA ligase of Paraburkholderia xenovorans (strain LB400).